The following is a 134-amino-acid chain: Large ribosomal subunit protein bL20 (134 aa).

Belongs to the bacterial ribosomal protein bL20 family.

Binds directly to 23S ribosomal RNA and is necessary for the in vitro assembly process of the 50S ribosomal subunit. It is not involved in the protein synthesizing functions of that subunit. This Sinorhizobium medicae (strain WSM419) (Ensifer medicae) protein is Large ribosomal subunit protein bL20.